A 209-amino-acid chain; its full sequence is Glutathione S-transferase 1, isoform D (209 aa).

The GST N-terminal domain maps to 1–80; sequence MDFYYLPGSA…YLAEKYGKDD (80 aa). Glutathione is bound by residues Ser9, 50–52, and 64–66; these read HCI and ESR. In terms of domain architecture, GST C-terminal spans 86–207; that stretch reads DPQKRAVVNQ…AGADEFKAKF (122 aa).

This sequence belongs to the GST superfamily. Theta family. In terms of assembly, homodimer.

The catalysed reaction is RX + glutathione = an S-substituted glutathione + a halide anion + H(+). It catalyses the reaction 1,1,1-trichloro-2,2-bis(4-chlorophenyl)ethane = 1,1-dichloro-2,2-bis(4-chlorophenyl)ethylene + chloride + H(+). With respect to regulation, inhibited by S-hexylglutathione. Conjugation of reduced glutathione to a wide number of exogenous and endogenous hydrophobic electrophiles. Has DDT dehydrochlorinase activity. This Anopheles gambiae (African malaria mosquito) protein is Glutathione S-transferase 1, isoform D (GstD1).